Here is a 108-residue protein sequence, read N- to C-terminus: ATP synthase subunit H, mitochondrial (108 aa).

The N-terminal 19 residues, 1 to 19 (MFTLRAASRRAFSTSIARR), are a transit peptide targeting the mitochondrion. 2 disordered regions span residues 40–60 (AKDA…KPPV) and 75–108 (APVD…GVAV). Low complexity predominate over residues 47–60 (VKPWSAPSAPKPPV). Residues 81-92 (GQTNSKSASPQA) are compositionally biased toward polar residues. Residues 93–108 (NDEDWLAFEEEEGVAV) are compositionally biased toward acidic residues.

F-type ATP synthases have 2 components, the catalytic core F(1) and the membrane-embedded component F(0), linked together by a central stalk and a peripheral stalk. The central stalk, also called rotor shaft, is often seen as part of F(1). The peripheral stalk is seen as part of F(0). F(0) contains the membrane channel next to the rotor. F-type ATP synthases form dimers but each monomer functions independently in ATP generation. The dimer consists of 17 different polypeptides: ATP1 (subunit alpha, 3 molecules per monomer, part of F(1)), ATP2 (subunit beta, 3 copies per monomer, part of F(1)), ATP3 (subunit gamma, part of the central stalk), ATP4 (subunit b, part of the peripheral stalk), ATP5/OSCP (subunit 5/OSCP, part of the peripheral stalk), ATP6 (subunit a, part of the peripheral stalk), ATP7 (subunit d, part of the peripheral stalk), ATP8 (subunit 8, part of the peripheral stalk), OLI1 (subunit c, part of the rotor, 10 molecules per monomer), ATP14 (subunit H, part of the peripheral stalk), ATP15 (subunit epsilon, part of the central stalk), ATP16 (subunit delta, part of the central stalk), ATP17 (subunit f, part of the peripheral stalk), ATP18 (subunit i/j, part of the peripheral stalk), ATP19 (subunit k, dimer-specific, at interface between monomers), ATP20 (subunit g, at interface between monomers), TIM11 (subunit e, at interface between monomers).

The protein resides in the mitochondrion inner membrane. Functionally, mitochondrial membrane ATP synthase (F(1)F(0) ATP synthase or Complex V) produces ATP from ADP in the presence of a proton gradient across the membrane which is generated by electron transport complexes of the respiratory chain. F-type ATP synthases consist of two structural domains, F(1) - containing the extramembraneous catalytic core, and F(0) - containing the membrane proton channel, linked together by a central stalk and a peripheral stalk. During catalysis, ATP synthesis in the catalytic domain of F(1) is coupled via a rotary mechanism of the central stalk subunits to proton translocation. Part of the peripheral stalk. In Yarrowia lipolytica (strain CLIB 122 / E 150) (Yeast), this protein is ATP synthase subunit H, mitochondrial.